A 153-amino-acid polypeptide reads, in one-letter code: 3-hydroxyacyl-[acyl-carrier-protein] dehydratase FabZ (153 aa).

Residue H59 is part of the active site.

This sequence belongs to the thioester dehydratase family. FabZ subfamily.

It is found in the cytoplasm. The enzyme catalyses a (3R)-hydroxyacyl-[ACP] = a (2E)-enoyl-[ACP] + H2O. In terms of biological role, involved in unsaturated fatty acids biosynthesis. Catalyzes the dehydration of short chain beta-hydroxyacyl-ACPs and long chain saturated and unsaturated beta-hydroxyacyl-ACPs. The sequence is that of 3-hydroxyacyl-[acyl-carrier-protein] dehydratase FabZ from Thermosynechococcus vestitus (strain NIES-2133 / IAM M-273 / BP-1).